Consider the following 526-residue polypeptide: Amine oxidase [flavin-containing] A (526 aa).

An N-acetylmethionine modification is found at methionine 1. The Cytoplasmic segment spans residues 1-497; sequence MTDLEKPSIT…HTFLERNLPS (497 aa). Serine 383 is modified (phosphoserine). The residue at position 406 (cysteine 406) is an S-8alpha-FAD cysteine. Residues 498–518 traverse the membrane as a helical; Anchor for type IV membrane protein segment; that stretch reads VPGLLKITGFSTSVALLCFVL. The Mitochondrial intermembrane portion of the chain corresponds to 519–526; that stretch reads YKFKQPQS. Residues 520 to 522 are interaction with membrane phospholipid headgroups; the sequence is KFK.

This sequence belongs to the flavin monoamine oxidase family. In terms of assembly, monomer, homo- or heterodimer (containing two subunits of similar size). Each subunit contains a covalently bound flavin. Enzymatically active as monomer. Requires FAD as cofactor.

It is found in the mitochondrion outer membrane. It carries out the reaction a secondary aliphatic amine + O2 + H2O = a primary amine + an aldehyde + H2O2. It catalyses the reaction a primary methyl amine + O2 + H2O = an aldehyde + H2O2 + NH4(+). The enzyme catalyses serotonin + O2 + H2O = (5-hydroxyindol-3-yl)acetaldehyde + H2O2 + NH4(+). The catalysed reaction is (R)-adrenaline + O2 + H2O = (R)-3,4-dihydroxymandelaldehyde + methylamine + H2O2. It carries out the reaction dopamine + O2 + H2O = 3,4-dihydroxyphenylacetaldehyde + H2O2 + NH4(+). It catalyses the reaction tyramine + O2 + H2O = (4-hydroxyphenyl)acetaldehyde + H2O2 + NH4(+). The enzyme catalyses (R)-noradrenaline + O2 + H2O = (R)-3,4-dihydroxymandelaldehyde + H2O2 + NH4(+). The catalysed reaction is kynuramine + O2 + H2O = 3-(2-aminophenyl)-3-oxopropanal + H2O2 + NH4(+). It carries out the reaction tryptamine + O2 + H2O = indole-3-acetaldehyde + H2O2 + NH4(+). It catalyses the reaction 2-phenylethylamine + O2 + H2O = 2-phenylacetaldehyde + H2O2 + NH4(+). Catalyzes the oxidative deamination of biogenic and xenobiotic amines and has important functions in the metabolism of neuroactive and vasoactive amines in the central nervous system and peripheral tissues. Preferentially oxidizes serotonin. Also catalyzes the oxidative deamination of kynuramine to 3-(2-aminophenyl)-3-oxopropanal that can spontaneously condense to 4-hydroxyquinoline. The protein is Amine oxidase [flavin-containing] A of Mus musculus (Mouse).